The following is a 359-amino-acid chain: N-acetylneuraminate-9-phosphate synthase (359 aa).

3 positions are modified to N6-acetyllysine: K61, K74, and K79. Position 275 is a phosphoserine (S275). At K290 the chain carries N6-acetyllysine. Residues 294–353 (SVVAKVKIPEGTILTMDMLTVKVGEPKGYPPEDIFNLVGKKVLVTVEEDDTIMEELVDNH) form the AFP-like domain.

Ubiquitous.

It catalyses the reaction aldehydo-N-acetyl-D-mannosamine 6-phosphate + phosphoenolpyruvate + H2O = N-acetylneuraminate 9-phosphate + phosphate. It carries out the reaction aldehydo-D-mannose 6-phosphate + phosphoenolpyruvate + H2O = 3-deoxy-D-glycero-beta-D-galacto-non-2-ulopyranosonate 9-phosphate + phosphate. In terms of biological role, catalyzes the condensation of phosphoenolpyruvate (PEP) and N-acetylmannosamine 6-phosphate (ManNAc-6-P) to synthesize N-acetylneuraminate-9-phosphate (Neu5Ac-9-P). Also catalyzes the condensation of PEP and D-mannose 6-phosphate (Man-6-P) to produce 3-deoxy-D-glycero-beta-D-galacto-non-2-ulopyranosonate 9-phosphate (KDN-9-P). Neu5Ac-9-P and KDN-9-P are the phosphorylated forms of sialic acids N-acetylneuraminic acid (Neu5Ac) and deaminoneuraminic acid (KDN), respectively. Required for brain and skeletal development. In Homo sapiens (Human), this protein is N-acetylneuraminate-9-phosphate synthase.